Here is a 332-residue protein sequence, read N- to C-terminus: L-lactate dehydrogenase A chain (332 aa).

Residues 29-57 and arginine 99 each bind NAD(+); that span reads GMVG…MEDK. Residues arginine 106, asparagine 138, and arginine 169 each coordinate substrate. Asparagine 138 contributes to the NAD(+) binding site. Residue histidine 193 is the Proton acceptor of the active site. Threonine 248 lines the substrate pocket.

It belongs to the LDH/MDH superfamily. LDH family. As to quaternary structure, homotetramer.

It localises to the cytoplasm. The catalysed reaction is (S)-lactate + NAD(+) = pyruvate + NADH + H(+). Its pathway is fermentation; pyruvate fermentation to lactate; (S)-lactate from pyruvate: step 1/1. In terms of biological role, interconverts simultaneously and stereospecifically pyruvate and lactate with concomitant interconversion of NADH and NAD(+). The protein is L-lactate dehydrogenase A chain (ldha) of Eleginops maclovinus (Patagonian blennie).